Reading from the N-terminus, the 921-residue chain is Probable dipeptidyl-aminopeptidase B (921 aa).

A disordered region spans residues Met-1–Gly-87. The Cytoplasmic portion of the chain corresponds to Met-1–Lys-108. Over residues Ser-22–Val-33 the composition is skewed to low complexity. The segment covering Asp-35–Tyr-45 has biased composition (basic and acidic residues). Residues Pro-66–Ser-75 are compositionally biased toward acidic residues. The chain crosses the membrane as a helical; Signal-anchor for type II membrane protein span at residues Val-109–Leu-129. Residues Ser-130–Val-921 are Vacuolar-facing. N-linked (GlcNAc...) asparagine glycans are attached at residues Asn-131, Asn-364, and Asn-577. Ser-768 (charge relay system) is an active-site residue. A glycan (N-linked (GlcNAc...) asparagine) is linked at Asn-827. Residues Asp-845 and His-878 each act as charge relay system in the active site.

This sequence belongs to the peptidase S9B family.

The protein localises to the vacuole membrane. The catalysed reaction is Release of an N-terminal dipeptide, Xaa-Yaa-|-Zaa-, from a polypeptide, preferentially when Yaa is Pro, provided Zaa is neither Pro nor hydroxyproline.. Type IV dipeptidyl-peptidase which removes N-terminal dipeptides sequentially from polypeptides having unsubstituted N-termini provided that the penultimate residue is proline. The polypeptide is Probable dipeptidyl-aminopeptidase B (DAPB) (Colletotrichum graminicola (strain M1.001 / M2 / FGSC 10212) (Maize anthracnose fungus)).